Reading from the N-terminus, the 1238-residue chain is Anion exchange protein 2 (1238 aa).

The interval 1-238 (MSGTPRRPAS…YNLQERRRIG (238 aa)) is disordered. Residues 1–704 (MSGTPRRPAS…SDFRDALDPQ (704 aa)) lie on the Cytoplasmic side of the membrane. Composition is skewed to basic and acidic residues over residues 37-49 (DLHRTLGVERFEE) and 58-75 (GGEELGRSYGEEDFEYHR). 2 stretches are compositionally biased toward basic residues: residues 76 to 85 (QSSHHIHHPL) and 94 to 110 (RRRKTPQGQVRKPRRRP). A compositionally biased stretch (acidic residues) spans 120-133 (TIEEGEEDEDETSE). Phosphoserine is present on residues Ser-132, Ser-144, Ser-170, and Ser-172. Residues 141–154 (TDPSPASTPTSVQF) are compositionally biased toward polar residues. A compositionally biased stretch (gly residues) spans 205 to 215 (GTAGGDDGGAS). Ser-239 is modified (phosphoserine). The residue at position 253 (Thr-253) is a Phosphothreonine. Residue Lys-270 is modified to N6-methyllysine. The disordered stretch occupies residues 277-315 (VPGVRRHLVRKNAKGSSQSSREGREPGPTPRTRPRAPHK). The span at 280–289 (VRRHLVRKNA) shows a compositional bias: basic residues. At Ser-439 the chain carries Phosphoserine. Residues 445–466 (SLLGHHHTQGAESDPHVTEPLI) form a disordered region. 4 helical membrane-spanning segments follow: residues 705-728 (CLAAVIFIYFAALSPAITFGGLLG), 734-771 (LIGVSELIMSTALQGVTFCLLGAQPLLVIGFSGPLLVF), 791-813 (VWIGFWLVLSALLMVALEGSFLV), and 823-844 (IFAFLISLIFIYETFYKLVKIF). Residues 705 to 1238 (CLAAVIFIYF…DEYNEMPMPV (534 aa)) form a membrane (anion exchange) region. Residues 845–897 (QEHPLHGCLASNSSEADGGKNTTWTEAAPTPGHGNTSSAEQAGVERPQGQPNT) are Extracellular-facing. Asn-856, Asn-865, and Asn-879 each carry an N-linked (GlcNAc...) asparagine glycan. Residues 858–869 (SEADGGKNTTWT) show a composition bias toward polar residues. The disordered stretch occupies residues 858 to 892 (SEADGGKNTTWTEAAPTPGHGNTSSAEQAGVERPQ). The helical transmembrane segment at 898–915 (ALLSLVLMAGTFFIAFFL) threads the bilayer. The Cytoplasmic segment spans residues 916–930 (RKFKNSRFFPGRIRR). The next 5 helical transmembrane spans lie at 931–951 (VIGDFGVPIAILIMVLVDYSI), 985–1007 (PFPVWMMVASLLPAILVFILIFM), 1033–1054 (LLLIVAMGGICALFGLLWLAAA), 1088–1133 (VTGL…IQFY), and 1160–1196 (MHLFKALQLLCLALLWAVMSTAASLAFPFILILTVPL). Cys-1170 is lipidated: S-palmitoyl cysteine.

The protein belongs to the anion exchanger (TC 2.A.31) family. Expressed in the cochlea (at protein level).

The protein resides in the apical cell membrane. It is found in the basolateral cell membrane. It carries out the reaction hydrogencarbonate(in) + chloride(out) = hydrogencarbonate(out) + chloride(in). Its function is as follows. Sodium-independent anion exchanger which mediates the electroneutral exchange of chloride for bicarbonate ions across the cell membrane. Plays an important role in osteoclast differentiation and function. Regulates bone resorption and calpain-dependent actin cytoskeleton organization in osteoclasts via anion exchange-dependent control of pH. Essential for intracellular pH regulation in CD8(+) T-cells upon CD3 stimulation, modulating CD8(+) T-cell response. This is Anion exchange protein 2 (SLC4A2) from Cavia porcellus (Guinea pig).